A 263-amino-acid chain; its full sequence is Hydroxyethylthiazole kinase (263 aa).

Residue M39 participates in substrate binding. Residues K115 and T160 each coordinate ATP. Residue G187 coordinates substrate.

The protein belongs to the Thz kinase family. Requires Mg(2+) as cofactor.

The enzyme catalyses 5-(2-hydroxyethyl)-4-methylthiazole + ATP = 4-methyl-5-(2-phosphooxyethyl)-thiazole + ADP + H(+). The protein operates within cofactor biosynthesis; thiamine diphosphate biosynthesis; 4-methyl-5-(2-phosphoethyl)-thiazole from 5-(2-hydroxyethyl)-4-methylthiazole: step 1/1. Functionally, catalyzes the phosphorylation of the hydroxyl group of 4-methyl-5-beta-hydroxyethylthiazole (THZ). This is Hydroxyethylthiazole kinase from Staphylococcus aureus (strain bovine RF122 / ET3-1).